The chain runs to 300 residues: Nucleotide-binding protein Dshi_0209 (300 aa).

20–27 (GPSGAGRT) is an ATP binding site. 67-70 (DART) is a GTP binding site.

The protein belongs to the RapZ-like family.

Its function is as follows. Displays ATPase and GTPase activities. The polypeptide is Nucleotide-binding protein Dshi_0209 (Dinoroseobacter shibae (strain DSM 16493 / NCIMB 14021 / DFL 12)).